Here is a 113-residue protein sequence, read N- to C-terminus: Putative anti-sigma factor antagonist TM_1081 (113 aa).

The STAS domain occupies 1 to 110 (MFPYKIVDDV…DTISEAMEEV (110 aa)). Ser-55 carries the phosphoserine modification.

It belongs to the anti-sigma-factor antagonist family. In terms of processing, phosphorylated on a serine residue.

In terms of biological role, in the phosphorylated form it could act as an anti-anti-sigma factor that counteracts an anti-sigma factor and thus releases a sigma factor from inhibition. This Thermotoga maritima (strain ATCC 43589 / DSM 3109 / JCM 10099 / NBRC 100826 / MSB8) protein is Putative anti-sigma factor antagonist TM_1081.